The primary structure comprises 126 residues: Hydrogenase maturation factor HypA (126 aa).

Residue H2 coordinates Ni(2+). Residues C78, C81, C97, and C100 each coordinate Zn(2+).

Belongs to the HypA/HybF family.

In terms of biological role, involved in the maturation of [NiFe] hydrogenases. Required for nickel insertion into the metal center of the hydrogenase. This is Hydrogenase maturation factor HypA from Methanococcus maripaludis (strain C7 / ATCC BAA-1331).